Consider the following 449-residue polypeptide: UDP-N-acetylglucosamine 1-carboxyvinyltransferase (449 aa).

Phosphoenolpyruvate is bound at residue 51-52; sequence KN. Arg-121 lines the UDP-N-acetyl-alpha-D-glucosamine pocket. The Proton donor role is filled by Cys-145. Cys-145 is subject to 2-(S-cysteinyl)pyruvic acid O-phosphothioketal. UDP-N-acetyl-alpha-D-glucosamine-binding positions include 150-154, Asp-333, and Ile-355; that span reads RPVDQ.

The protein belongs to the EPSP synthase family. MurA subfamily.

It localises to the cytoplasm. The catalysed reaction is phosphoenolpyruvate + UDP-N-acetyl-alpha-D-glucosamine = UDP-N-acetyl-3-O-(1-carboxyvinyl)-alpha-D-glucosamine + phosphate. The protein operates within cell wall biogenesis; peptidoglycan biosynthesis. Its function is as follows. Cell wall formation. Adds enolpyruvyl to UDP-N-acetylglucosamine. This is UDP-N-acetylglucosamine 1-carboxyvinyltransferase from Burkholderia lata (strain ATCC 17760 / DSM 23089 / LMG 22485 / NCIMB 9086 / R18194 / 383).